Reading from the N-terminus, the 779-residue chain is Transcription factor SPT20 homolog (779 aa).

S296 is subject to Phosphoserine. Disordered regions lie at residues 373–392 and 420–507; these read DEESDSQMSPSHSSTDDHSN and PVKM…IPRK. Low complexity predominate over residues 424-437; the sequence is SHSSSGSASLSQVS. Residues 445-454 show a composition bias toward polar residues; the sequence is TETVSVQSSV. Residues 470–479 are compositionally biased toward low complexity; sequence SSSGNSSSGN. Phosphothreonine is present on T494. S519 and S524 each carry phosphoserine. 2 disordered regions span residues 641 to 677 and 755 to 779; these read QLSQFTPQQPQQPTTCSPQQPGEQGSEQGSTSQEQAL and LHHHRHTGSQSKSKMKRGTPTTPKF. Positions 755 to 771 are enriched in basic residues; sequence LHHHRHTGSQSKSKMKR.

This sequence belongs to the SPT20 family. Interacts with MAPK14. Interacts with ATG9A. Highly expressed in testis, moderately in brain and pituitary gland. Expressed in several fetal tissues, including lung, brain, thymus and kidney. Expression is down-regulated in malignant prostate tissues.

It localises to the nucleus. Its function is as follows. Required for MAP kinase p38 (MAPK11, MAPK12, MAPK13 and/or MAPK14) activation during gastrulation. Required for down-regulation of E-cadherin during gastrulation by regulating E-cadherin protein level downstream from NCK-interacting kinase (NIK) and independently of the regulation of transcription by FGF signaling and Snail. Required for starvation-induced ATG9A trafficking during autophagy. This chain is Transcription factor SPT20 homolog (SUPT20H), found in Homo sapiens (Human).